A 414-amino-acid polypeptide reads, in one-letter code: CinA-like protein (414 aa).

Belongs to the CinA family.

The chain is CinA-like protein from Akkermansia muciniphila (strain ATCC BAA-835 / DSM 22959 / JCM 33894 / BCRC 81048 / CCUG 64013 / CIP 107961 / Muc).